The primary structure comprises 887 residues: DNA mismatch repair protein MutS (887 aa).

621-628 (GPNMGGKS) is a binding site for ATP. A disordered region spans residues 828-853 (AEPEPNKPAAAAKTKPASPQPDLFAS). Over residues 834–848 (KPAAAAKTKPASPQP) the composition is skewed to low complexity.

It belongs to the DNA mismatch repair MutS family.

In terms of biological role, this protein is involved in the repair of mismatches in DNA. It is possible that it carries out the mismatch recognition step. This protein has a weak ATPase activity. The chain is DNA mismatch repair protein MutS from Saccharophagus degradans (strain 2-40 / ATCC 43961 / DSM 17024).